Reading from the N-terminus, the 484-residue chain is Glutamate--tRNA ligase (484 aa).

A 'HIGH' region motif is present at residues 11–21 (PSPTGYLHIGN). The 'KMSKS' region signature appears at 252–256 (KLSKR). Lys-255 contacts ATP.

It belongs to the class-I aminoacyl-tRNA synthetase family. Glutamate--tRNA ligase type 1 subfamily. As to quaternary structure, monomer.

The protein localises to the cytoplasm. It catalyses the reaction tRNA(Glu) + L-glutamate + ATP = L-glutamyl-tRNA(Glu) + AMP + diphosphate. Functionally, catalyzes the attachment of glutamate to tRNA(Glu) in a two-step reaction: glutamate is first activated by ATP to form Glu-AMP and then transferred to the acceptor end of tRNA(Glu). This Staphylococcus aureus (strain Mu3 / ATCC 700698) protein is Glutamate--tRNA ligase.